A 689-amino-acid polypeptide reads, in one-letter code: Glycine--tRNA ligase beta subunit (689 aa).

It belongs to the class-II aminoacyl-tRNA synthetase family. Tetramer of two alpha and two beta subunits.

Its subcellular location is the cytoplasm. The catalysed reaction is tRNA(Gly) + glycine + ATP = glycyl-tRNA(Gly) + AMP + diphosphate. The chain is Glycine--tRNA ligase beta subunit from Shewanella baltica (strain OS185).